The sequence spans 206 residues: Small ribosomal subunit protein uS4 (206 aa).

Positions 15–46 (MGENIWGRPKSPVNKREYGPGQHGQRRKNKLS) are disordered. The S4 RNA-binding domain maps to 94 to 154 (RRLDAIVYRA…EKSRQLALVL (61 aa)).

The protein belongs to the universal ribosomal protein uS4 family. Part of the 30S ribosomal subunit. Contacts protein S5. The interaction surface between S4 and S5 is involved in control of translational fidelity.

In terms of biological role, one of the primary rRNA binding proteins, it binds directly to 16S rRNA where it nucleates assembly of the body of the 30S subunit. Its function is as follows. With S5 and S12 plays an important role in translational accuracy. The chain is Small ribosomal subunit protein uS4 from Cereibacter sphaeroides (strain ATCC 17029 / ATH 2.4.9) (Rhodobacter sphaeroides).